The sequence spans 191 residues: Probable rho GDP-dissociation inhibitor (191 aa).

Residues 1–22 (MSDHENTGENTSEYQYKQPPQK) form a disordered region. Polar residues predominate over residues 8-21 (GENTSEYQYKQPPQ).

The protein belongs to the Rho GDI family.

Its subcellular location is the cytoplasm. Its function is as follows. Regulates the GDP/GTP exchange reaction of the Rho proteins by inhibiting the dissociation of GDP from them, and the subsequent binding of GTP to them. The sequence is that of Probable rho GDP-dissociation inhibitor (rhi-1) from Caenorhabditis elegans.